A 488-amino-acid polypeptide reads, in one-letter code: RuvB-like helicase 1 (488 aa).

The segment covering Met1–Met11 has biased composition (polar residues). A disordered region spans residues Met1–Glu29. ATP is bound at residue Gly87–Thr94.

Belongs to the RuvB family. May form heterododecamers with RVB2. Component of the SWR1 chromatin remodeling complex, the INO80 chromatin remodeling complex, and of the R2TP complex.

Its subcellular location is the nucleus. It carries out the reaction ATP + H2O = ADP + phosphate + H(+). In terms of biological role, DNA helicase which participates in several chromatin remodeling complexes, including the SWR1 and the INO80 complexes. The SWR1 complex mediates the ATP-dependent exchange of histone H2A for the H2A variant HZT1 leading to transcriptional regulation of selected genes by chromatin remodeling. The INO80 complex remodels chromatin by shifting nucleosomes and is involved in DNA repair. Also involved in pre-rRNA processing. This chain is RuvB-like helicase 1 (RVB1), found in Mycosarcoma maydis (Corn smut fungus).